A 546-amino-acid polypeptide reads, in one-letter code: Flavin-dependent oxygenase ucdF (546 aa).

Residues 81–263 (QGRIPYYAVM…VNTTIRTFPD (183 aa)) form the FAD-binding PCMH-type domain.

It belongs to the oxygen-dependent FAD-linked oxidoreductase family.

Nonribosomal peptide synthetase that mediates the biosynthesis of usterphenyllins and uscandidusins, p-terphenyl derivatives. The function of ucdF within the pathway still remains to be determined. UcdE further prenylates position C-14 of ring C of usterphenyllin B to form usterphenyllin A. The pathway begin with the biosynthesis of 4-hydroxyphenylpyruvate (HPPA) from L-tyrosine, possibly by the aminotransferase ucdG. The nonribosomal peptide synthetase ucdA then condenses two HPPA units to produce atromentin. The key step in this pathway is the reduction and dehydration of atromentin to form a terphenyl triol intermediate, performed by the NAD-dependent dehydrogenase ucdB. Further O-methylation by the methyltransferase ucdC forms terphenyllin carrying two methoxy moieties at C-9 and C-12, and subsequent dihydroxylation at C-3 of ring A and C-15 of ring C by the flavin-dependent oxygenase ucdD leads to 3,15-dihydroxyterphenyllin. Prenylation by ucdE at position C-5 of ring A forms usterphenyllin B, and is followed by a second prenylation at position C-14 of ring C to form usterphenyllin A. The following furan ring formation that leads to uscandidusins A and B was proven to be an unexpected spontaneous non-enzymatic reaction. The chain is Flavin-dependent oxygenase ucdF from Aspergillus ustus.